The following is a 912-amino-acid chain: WD repeat-containing protein 44 (912 aa).

A compositionally biased stretch (acidic residues) spans 1–14; sequence MASESDTEEFFDAP. Positions 1–25 are disordered; that stretch reads MASESDTEEFFDAPEDVHLEGGDPI. Residue alanine 2 is modified to N-acetylalanine. The tract at residues 2–170 is binding activity; the sequence is ASESDTEEFF…SSTAQLNVPE (169 aa). At serine 3 the chain carries Phosphoserine. The FFAT-like motif signature appears at 9–15; sequence EFFDAPE. Phosphoserine is present on residues serine 50, serine 66, serine 71, serine 81, serine 96, and serine 126. Disordered regions lie at residues 79–104 and 118–152; these read DDSL…GTEL and QEDS…KPVD. Residues 89-104 are compositionally biased toward polar residues; the sequence is QSDQATASPVTAGTEL. A Phosphothreonine modification is found at threonine 158. Disordered stretches follow at residues 183–202, 207–279, 318–349, 396–422, and 457–479; these read VKES…TKDF, EVAP…PKEN, QENG…ELTD, SNDA…RLKQ, and RDEV…MPYT. Residues 210-256 form an important for interaction with ARHGAP26 AND ARHGAP10 region; it reads PAKPPRQLTPEPDIVASTKKPVPARPPPPANFPPPRPPPPSRPAPPP. Position 218 is a phosphothreonine (threonine 218). Residues 232–255 are compositionally biased toward pro residues; it reads PARPPPPANFPPPRPPPPSRPAPP. Serine 261 carries the phosphoserine modification. Residues 261–277 are compositionally biased toward basic and acidic residues; the sequence is SELEFEALKTPDLDVPK. Threonine 270 carries the post-translational modification Phosphothreonine. The tract at residues 333–346 is important for interaction with RAB11A; it reads VMGPQRPRSNSGRE. Residues 334–504 form an interaction with RAB11 region; the sequence is MGPQRPRSNS…DFDQIKVVQD (171 aa). Phosphoserine is present on residues serine 341 and serine 343. Position 348 is a phosphothreonine (threonine 348). Phosphoserine is present on residues serine 402, serine 469, serine 470, and serine 471. Residues 466–475 show a composition bias toward acidic residues; it reads DDPSSSDDEG. Phosphotyrosine is present on tyrosine 478. One copy of the WD 1 repeat lies at 508–547; that stretch reads EHMGAVWTMKFSHCGRLLASAGQDNVVRIWALKNAFDYFN. The disordered stretch occupies residues 556 to 592; that stretch reads EGRVSPSPSQESLNSSKSDTDTGVCSGTDEDPDDKNA. A phosphoserine mark is found at serine 560 and serine 564. Low complexity predominate over residues 560 to 572; it reads SPSPSQESLNSSK. WD repeat units lie at residues 604–642, 644–684, 689–728, 739–778, 783–822, and 871–912; these read GHTA…CLCC, QHID…VALW, GQTK…YHTQ, KVGR…LSMK, VNSS…SKFT, and EDAE…KNLS.

Interacts with the GTP-bound form of RAB11A when membrane-associated. Interacts with GRAF1/ARHGAP26 or GRAF2/ARHGAP10; the interaction connects the endoplasmic reticulum (ER) with the endosomal tubule. Interacts (via FFAT-like motif) with VAPA (via MSP domain) or VAPB (via MSP domain); the interaction connects the ER with the endosomal tubule. Does not bind to other Rab and Rho small G proteins. Post-translationally, phosphorylated by ATK1; the phosphorylation stabilizes its interaction with RAB11A and RAB11B. Highly expressed in brain.

The protein localises to the cytoplasm. It localises to the cytosol. Its subcellular location is the perinuclear region. The protein resides in the endosome membrane. It is found in the golgi apparatus. The protein localises to the trans-Golgi network. Downstream effector for Rab11 which regulates Rab11 intracellular membrane trafficking functions such as endocytic recycling, intracellular ciliogenesis and protein export. ATK1-mediated phosphorylation of WDR44 induces binding to Rab11 which activates endocytic recycling of transferrin receptor back to the plasma membrane. When bound to Rab11, prevents the formation of the ciliogenic Rab11-Rabin8/RAB3IP-RAB11FIP3 complex, therefore inhibiting preciliary trafficking and ciliogenesis. Participates in neo-synthesized protein export by connecting the endoplasmic reticulum (ER) with the endosomal tubule via direct interactions with the integral ER proteins VAPA or VAPB and the endosomal protein GRAFs (GRAF1/ARHGAP26 or GRAF2/ARHGAP10), which facilitates the transfer of proteins such as E-cadherin, MPP14 and CFTR into a Rab8-Rab10-Rab11-dependent export route. The chain is WD repeat-containing protein 44 (WDR44) from Bos taurus (Bovine).